The chain runs to 1651 residues: Roundabout homolog 1 (1651 aa).

Residues 1-25 (MKWKHVPFLVMISLLSLSPNHLFLA) form the signal peptide. Residues 26-897 (QLIPDPEDVE…QQISDVVKQP (872 aa)) lie on the Extracellular side of the membrane. Residues 33 to 57 (DVERGNDHGTPIPTSDNDDNSLGYT) are disordered. Residues 44 to 56 (IPTSDNDDNSLGY) are compositionally biased toward polar residues. Ig-like C2-type domains follow at residues 68-164 (PRIV…ASLE), 170-257 (DDFR…AELT), 262-346 (PSFV…ATLT), 351-446 (PHFV…LEVT), and 455-541 (PVIR…AYIE). Residues cysteine 89 and cysteine 147 are joined by a disulfide bond. An N-linked (GlcNAc...) asparagine glycan is attached at asparagine 160. 3 cysteine pairs are disulfide-bonded: cysteine 191-cysteine 240, cysteine 283-cysteine 330, and cysteine 372-cysteine 428. N-linked (GlcNAc...) asparagine glycosylation is present at asparagine 463. Residues cysteine 476 and cysteine 525 are joined by a disulfide bond. 3 Fibronectin type-III domains span residues 563 to 657 (APSK…TQDV), 676 to 773 (AVLH…TLEE), and 778 to 874 (PPQG…LDAH). Residues asparagine 790, asparagine 820, and asparagine 827 are each glycosylated (N-linked (GlcNAc...) asparagine). A helical transmembrane segment spans residues 898 to 918 (AFIAGIGAACWIILMVFSIWL). The Cytoplasmic segment spans residues 919–1651 (YRHRKKRNGL…NNEELEETES (733 aa)). The residue at position 940 (serine 940) is a Phosphoserine. Phosphothreonine is present on threonine 948. Tyrosine 1038 is modified (phosphotyrosine; by ABL; in vitro). Residue serine 1055 is modified to Phosphoserine. Tyrosine 1073 and tyrosine 1114 each carry phosphotyrosine; by ABL; in vitro. 4 disordered regions span residues 1124-1202 (KDYR…SEEY), 1224-1337 (YLQQ…ADME), 1352-1397 (EQTP…DGSF), and 1420-1651 (RRQM…ETES). A compositionally biased stretch (polar residues) spans 1137–1146 (PYNQSYDQNT). The segment covering 1147–1163 (GGSYNSSDRGSSTSGSQ) has biased composition (low complexity). Over residues 1186–1196 (LPPPPAHPPPH) the composition is skewed to pro residues. Residue threonine 1240 is modified to Phosphothreonine. A compositionally biased stretch (polar residues) spans 1255–1269 (YSHQSTATLTPSPQE). The segment covering 1281 to 1293 (ETGHMQHQPDRRR) has biased composition (basic and acidic residues). Positions 1296–1307 (VSPPPPPRPISP) are enriched in pro residues. A Phosphoserine modification is found at serine 1297. Residues 1322–1336 (MDTDAPEEEEDEADM) are compositionally biased toward acidic residues. Residues 1384–1397 (SSGRSSVSSSDGSF) are compositionally biased toward low complexity. A compositionally biased stretch (polar residues) spans 1438–1451 (PRPTSPVSTDSNMS). Over residues 1459-1470 (RPAKKLKHQPGH) the composition is skewed to basic residues. Residues 1480 to 1490 (LPPPPVPPPAI) are compositionally biased toward pro residues. 2 stretches are compositionally biased toward basic and acidic residues: residues 1516–1541 (ARTDRSSDRKGSSYKGREVLDGRQVV) and 1549–1573 (DPREAQEQQNDGKGRGNKAAKRDLP). The span at 1592 to 1601 (FPTSNNPRDP) shows a compositional bias: polar residues. The span at 1602–1614 (SSSSSMSSRGSGS) shows a compositional bias: low complexity. Acidic residues predominate over residues 1642 to 1651 (NNEELEETES).

This sequence belongs to the immunoglobulin superfamily. ROBO family. In terms of assembly, homodimer. Dimerization is mediated by the extracellular domain and is independent of SLIT liganding. Interacts with SLIT1. Interacts with SLIT2. Interacts with FLRT3. Interacts with MYO9B (via Rho-GAP domain). In terms of processing, ubiquitinated. May be deubiquitinated by USP33. In terms of tissue distribution, widely expressed, with exception of kidney.

Its subcellular location is the cell membrane. The protein localises to the cell projection. The protein resides in the axon. It is found in the endoplasmic reticulum-Golgi intermediate compartment membrane. Functionally, receptor for SLIT1 and SLIT2 that mediates cellular responses to molecular guidance cues in cellular migration, including axonal navigation at the ventral midline of the neural tube and projection of axons to different regions during neuronal development. Interaction with the intracellular domain of FLRT3 mediates axon attraction towards cells expressing NTN1. In axon growth cones, the silencing of the attractive effect of NTN1 by SLIT2 may require the formation of a ROBO1-DCC complex. Plays a role in the regulation of cell migration via its interaction with MYO9B; inhibits MYO9B-mediated stimulation of RHOA GTPase activity, and thereby leads to increased levels of active, GTP-bound RHOA. May be required for lung development. The chain is Roundabout homolog 1 (ROBO1) from Homo sapiens (Human).